A 339-amino-acid polypeptide reads, in one-letter code: Ornithine carbamoyltransferase, catabolic (339 aa).

Carbamoyl phosphate contacts are provided by residues 57–60 (STRT), Gln84, Arg108, and 135–138 (HPTQ). L-ornithine contacts are provided by residues Asn167, Asp231, and 235 to 236 (SM). Carbamoyl phosphate contacts are provided by residues 274–275 (CL) and Arg319.

It belongs to the aspartate/ornithine carbamoyltransferase superfamily. OTCase family.

The protein localises to the cytoplasm. It carries out the reaction carbamoyl phosphate + L-ornithine = L-citrulline + phosphate + H(+). Its pathway is amino-acid degradation; L-arginine degradation via ADI pathway; carbamoyl phosphate from L-arginine: step 2/2. Reversibly catalyzes the transfer of the carbamoyl group from carbamoyl phosphate (CP) to the N(epsilon) atom of ornithine (ORN) to produce L-citrulline. This is Ornithine carbamoyltransferase, catabolic (arcB) from Enterococcus faecalis (strain ATCC 700802 / V583).